The following is a 287-amino-acid chain: ATP synthase gamma chain (287 aa).

It belongs to the ATPase gamma chain family. F-type ATPases have 2 components, CF(1) - the catalytic core - and CF(0) - the membrane proton channel. CF(1) has five subunits: alpha(3), beta(3), gamma(1), delta(1), epsilon(1). CF(0) has three main subunits: a, b and c.

The protein localises to the cell membrane. In terms of biological role, produces ATP from ADP in the presence of a proton gradient across the membrane. The gamma chain is believed to be important in regulating ATPase activity and the flow of protons through the CF(0) complex. This Mycoplasmopsis agalactiae (strain NCTC 10123 / CIP 59.7 / PG2) (Mycoplasma agalactiae) protein is ATP synthase gamma chain.